The sequence spans 608 residues: CTP synthase (608 aa).

The interval 1 to 271 is amidoligase domain; that stretch reads MGQAHITKHI…DAYVVRRLGL (271 aa). Residue serine 18 coordinates CTP. Serine 18 is a binding site for UTP. ATP is bound by residues 19-24 and aspartate 76; that span reads SLGKGL. Positions 76 and 145 each coordinate Mg(2+). Residues 152–154, 192–197, and lysine 228 contribute to the CTP site; these read DIE and KTKPTQ. UTP contacts are provided by residues 192–197 and lysine 228; that span reads KTKPTQ. The region spanning 296–545 is the Glutamine amidotransferase type-1 domain; it reads TIAIVGKYVD…VAAAVAHADR (250 aa). Glycine 359 provides a ligand contact to L-glutamine. Residue cysteine 386 is the Nucleophile; for glutamine hydrolysis of the active site. Residues 387 to 390, glutamate 410, and arginine 471 each bind L-glutamine; that span reads LGLQ. Catalysis depends on residues histidine 518 and glutamate 520. Residues 550–608 are disordered; that stretch reads LPVDLPSEDAPTPENGVPENGAAQTRGVTAGRSGGSIRRGASASRPSVSSNGTAALVSP. Low complexity predominate over residues 584–594; that stretch reads GSIRRGASASR.

Belongs to the CTP synthase family. Homotetramer.

It carries out the reaction UTP + L-glutamine + ATP + H2O = CTP + L-glutamate + ADP + phosphate + 2 H(+). The enzyme catalyses L-glutamine + H2O = L-glutamate + NH4(+). The catalysed reaction is UTP + NH4(+) + ATP = CTP + ADP + phosphate + 2 H(+). Its pathway is pyrimidine metabolism; CTP biosynthesis via de novo pathway; CTP from UDP: step 2/2. With respect to regulation, allosterically activated by GTP, when glutamine is the substrate; GTP has no effect on the reaction when ammonia is the substrate. The allosteric effector GTP functions by stabilizing the protein conformation that binds the tetrahedral intermediate(s) formed during glutamine hydrolysis. Inhibited by the product CTP, via allosteric rather than competitive inhibition. Functionally, catalyzes the ATP-dependent amination of UTP to CTP with either L-glutamine or ammonia as the source of nitrogen. Regulates intracellular CTP levels through interactions with the four ribonucleotide triphosphates. This chain is CTP synthase, found in Frankia casuarinae (strain DSM 45818 / CECT 9043 / HFP020203 / CcI3).